The chain runs to 267 residues: Putative F-box protein At5g38810 (267 aa).

The F-box domain occupies 4 to 53 (RKTFDSIPDDLFVEIALRLSSKSIARCRCVSKLWASILYRQDFTELFITK).

In Arabidopsis thaliana (Mouse-ear cress), this protein is Putative F-box protein At5g38810.